The following is a 354-amino-acid chain: Sulfate/thiosulfate import ATP-binding protein CysA (354 aa).

One can recognise an ABC transporter domain in the interval 3–237 (IEVRGLSKRF…PATPFVYGFL (235 aa)). 35–42 (GPSGCGKT) serves as a coordination point for ATP.

The protein belongs to the ABC transporter superfamily. Sulfate/tungstate importer (TC 3.A.1.6) family. The complex is composed of two ATP-binding proteins (CysA), two transmembrane proteins (CysT and CysW) and a solute-binding protein (CysP).

Its subcellular location is the cell inner membrane. The enzyme catalyses sulfate(out) + ATP + H2O = sulfate(in) + ADP + phosphate + H(+). The catalysed reaction is thiosulfate(out) + ATP + H2O = thiosulfate(in) + ADP + phosphate + H(+). In terms of biological role, part of the ABC transporter complex CysAWTP involved in sulfate/thiosulfate import. Responsible for energy coupling to the transport system. The sequence is that of Sulfate/thiosulfate import ATP-binding protein CysA from Bordetella bronchiseptica (strain ATCC BAA-588 / NCTC 13252 / RB50) (Alcaligenes bronchisepticus).